Consider the following 163-residue polypeptide: ATP synthase subunit b 1 (163 aa).

Residues 5–25 (LDATFFAFVGLVLFLALVVYL) form a helical membrane-spanning segment.

The protein belongs to the ATPase B chain family. As to quaternary structure, F-type ATPases have 2 components, F(1) - the catalytic core - and F(0) - the membrane proton channel. F(1) has five subunits: alpha(3), beta(3), gamma(1), delta(1), epsilon(1). F(0) has three main subunits: a(1), b(2) and c(10-14). The alpha and beta chains form an alternating ring which encloses part of the gamma chain. F(1) is attached to F(0) by a central stalk formed by the gamma and epsilon chains, while a peripheral stalk is formed by the delta and b chains.

The protein resides in the cell inner membrane. Its function is as follows. F(1)F(0) ATP synthase produces ATP from ADP in the presence of a proton or sodium gradient. F-type ATPases consist of two structural domains, F(1) containing the extramembraneous catalytic core and F(0) containing the membrane proton channel, linked together by a central stalk and a peripheral stalk. During catalysis, ATP synthesis in the catalytic domain of F(1) is coupled via a rotary mechanism of the central stalk subunits to proton translocation. In terms of biological role, component of the F(0) channel, it forms part of the peripheral stalk, linking F(1) to F(0). The sequence is that of ATP synthase subunit b 1 from Rhizobium etli (strain CIAT 652).